The primary structure comprises 420 residues: Ribosome biogenesis protein WDR12 homolog (420 aa).

Positions 10–92 (VQVHLKTKQE…EDAIEIEYVE (83 aa)) are ubiquitin-like (UBL) domain. WD repeat units follow at residues 104–142 (LHDD…LTIS), 143–185 (GHTA…NAVD), 192–231 (GHER…GVEG), 250–288 (GHRE…IKTE), 290–329 (STNK…GSVV), 335–375 (GHNA…APLY), and 379–417 (GHGD…AEDT).

The protein belongs to the WD repeat WDR12/YTM1 family.

Its subcellular location is the nucleus. The protein resides in the nucleolus. It localises to the nucleoplasm. Functionally, required for maturation of ribosomal RNAs and formation of the large ribosomal subunit. This Drosophila simulans (Fruit fly) protein is Ribosome biogenesis protein WDR12 homolog.